The chain runs to 204 residues: Putative AgrB-like protein (204 aa).

4 consecutive transmembrane segments (helical) span residues 52 to 74 (YGIALVTGLLLQTVTVHLSYLWL), 87 to 107 (LNCTLISLMMFVLAPFVFQNV), 111 to 131 (NWIVLGTFAFILLNMFLFAPA), and 156 to 176 (LILTGIALLIPFAEMKTLIMI).

The protein belongs to the AgrB family.

Its subcellular location is the cell membrane. May be involved in the proteolytic processing of a quorum sensing system signal molecule precursor. The chain is Putative AgrB-like protein from Listeria monocytogenes serotype 4a (strain HCC23).